The sequence spans 765 residues: E3 ubiquitin-protein ligase SlrP (765 aa).

Positions 1–451 (MFNITNIQST…VDYQGPRVLF (451 aa)) are interaction with target proteins. LRR repeat units lie at residues 200–219 (QITT…ENLQ), 221–242 (NIKT…LPDT), 243–262 (IQEM…RLPS), 263–284 (ALQS…LPEE), 285–305 (LRYL…LPSG), 306–325 (ITHL…TLPP), 326–346 (GLKT…SLPP), 347–368 (ELQV…LPPT), 369–389 (ITTL…LPAA), and 390–410 (LQIM…LPHF). Positions 452 to 461 (AMGDFSIVRV) are linker. An E3 ubiquitin-protein ligase catalytic domain region spans residues 462 to 765 (TRPLHQAVQG…VSSLMSAYWR (304 aa)). The region spanning 464–758 (PLHQAVQGWL…NILLKKEVSS (295 aa)) is the NEL domain. Cys-546 functions as the Glycyl thioester intermediate in the catalytic mechanism.

The protein belongs to the LRR-containing bacterial E3 ligase family. In terms of assembly, interacts with host TXN. Post-translationally, ubiquitinated in the presence of host E1 ubiquitin-activating enzyme, E2 ubiquitin-conjugating enzyme and ubiquitin.

It is found in the secreted. The protein localises to the host cytoplasm. It carries out the reaction S-ubiquitinyl-[E2 ubiquitin-conjugating enzyme]-L-cysteine + [acceptor protein]-L-lysine = [E2 ubiquitin-conjugating enzyme]-L-cysteine + N(6)-ubiquitinyl-[acceptor protein]-L-lysine.. With respect to regulation, binding to TXN is inhibited by hydrogen peroxide in vitro. Functionally, effector proteins function to alter host cell physiology and promote bacterial survival in host tissues. This protein is an E3 ubiquitin ligase that interferes with host's ubiquitination pathway. Can ubiquitinate both ubiquitin and host TXN (thioredoxin). Leads to significant decrease of thioredoxin activity and increase of host cell death. In Salmonella typhimurium (strain LT2 / SGSC1412 / ATCC 700720), this protein is E3 ubiquitin-protein ligase SlrP (slrP).